The primary structure comprises 431 residues: Glutamyl-tRNA(Gln) amidotransferase subunit A (431 aa).

Residues K55 and S130 each act as charge relay system in the active site. The Acyl-ester intermediate role is filled by S154.

Belongs to the amidase family. GatA subfamily. In terms of assembly, heterotrimer of A, B and C subunits.

The catalysed reaction is L-glutamyl-tRNA(Gln) + L-glutamine + ATP + H2O = L-glutaminyl-tRNA(Gln) + L-glutamate + ADP + phosphate + H(+). Allows the formation of correctly charged Gln-tRNA(Gln) through the transamidation of misacylated Glu-tRNA(Gln) in organisms which lack glutaminyl-tRNA synthetase. The reaction takes place in the presence of glutamine and ATP through an activated gamma-phospho-Glu-tRNA(Gln). This is Glutamyl-tRNA(Gln) amidotransferase subunit A from Methanococcus maripaludis (strain DSM 14266 / JCM 13030 / NBRC 101832 / S2 / LL).